The primary structure comprises 122 residues: Large ribosomal subunit protein uL14 (122 aa).

The protein belongs to the universal ribosomal protein uL14 family. Part of the 50S ribosomal subunit. Forms a cluster with proteins L3 and L19. In the 70S ribosome, L14 and L19 interact and together make contacts with the 16S rRNA in bridges B5 and B8.

In terms of biological role, binds to 23S rRNA. Forms part of two intersubunit bridges in the 70S ribosome. This is Large ribosomal subunit protein uL14 from Mycobacterium sp. (strain KMS).